The primary structure comprises 359 residues: PWWP domain-containing protein 1 (359 aa).

A disordered region spans residues 1-37 (MNNARTNAKRRRLSSKQGGLSISEGKESNIPSVVEES). A PWWP domain is found at 52–114 (FGDRILVKAP…RNSVKPLLDS (63 aa)). 2 disordered regions span residues 133-161 (AYEA…AAEE) and 204-255 (VAST…SPLN). Residues 204-224 (VASTSRSSTQLSDQRYPLSSN) are compositionally biased toward polar residues. A Phosphoserine modification is found at Ser-252.

In terms of assembly, interacts with set9 and histone H4K20me1. Associates with nucleosomes.

The protein localises to the nucleus. In terms of biological role, necessary for DNA damage checkpoint activation. Required for the association of set9 with chromatin and subsequent methylation of H4K20. Associates with H4K20me1 to increase the concentration of set9 on chromatin to perform H4K20me3. H4K20me3 is mainly enriched at heterochromatin and is required for proper heterochromatin assembly. The sequence is that of PWWP domain-containing protein 1 (pdp1) from Schizosaccharomyces pombe (strain 972 / ATCC 24843) (Fission yeast).